The following is a 280-amino-acid chain: ATP synthase subunit a (280 aa).

7 helical membrane passes run 45 to 65 (AINV…LFLF), 105 to 125 (LVAP…LMDL), 126 to 146 (LPVD…LKVV), 159 to 179 (LSIF…GGFF), 190 to 210 (FLFP…PISL), 223 to 243 (MIFI…LFGG), and 250 to 270 (AVFH…LTIV).

This sequence belongs to the ATPase A chain family. In terms of assembly, F-type ATPases have 2 components, CF(1) - the catalytic core - and CF(0) - the membrane proton channel. CF(1) has five subunits: alpha(3), beta(3), gamma(1), delta(1), epsilon(1). CF(0) has three main subunits: a(1), b(2) and c(9-12). The alpha and beta chains form an alternating ring which encloses part of the gamma chain. CF(1) is attached to CF(0) by a central stalk formed by the gamma and epsilon chains, while a peripheral stalk is formed by the delta and b chains.

The protein localises to the cell inner membrane. Key component of the proton channel; it plays a direct role in the translocation of protons across the membrane. This chain is ATP synthase subunit a, found in Thiobacillus denitrificans (strain ATCC 25259 / T1).